The sequence spans 386 residues: S-adenosylmethionine synthase (386 aa).

H16 contacts ATP. D18 serves as a coordination point for Mg(2+). E44 lines the K(+) pocket. Positions 57 and 100 each coordinate L-methionine. The segment at 100 to 110 (QSPDINQGVDQ) is flexible loop. Residues 164-166 (DGK), 230-231 (RF), D239, 245-246 (RK), A262, and K266 contribute to the ATP site. D239 contributes to the L-methionine binding site. K270 contacts L-methionine.

This sequence belongs to the AdoMet synthase family. Homotetramer; dimer of dimers. Mg(2+) serves as cofactor. It depends on K(+) as a cofactor.

It is found in the cytoplasm. It carries out the reaction L-methionine + ATP + H2O = S-adenosyl-L-methionine + phosphate + diphosphate. It functions in the pathway amino-acid biosynthesis; S-adenosyl-L-methionine biosynthesis; S-adenosyl-L-methionine from L-methionine: step 1/1. In terms of biological role, catalyzes the formation of S-adenosylmethionine (AdoMet) from methionine and ATP. The overall synthetic reaction is composed of two sequential steps, AdoMet formation and the subsequent tripolyphosphate hydrolysis which occurs prior to release of AdoMet from the enzyme. The sequence is that of S-adenosylmethionine synthase from Nitratiruptor sp. (strain SB155-2).